The chain runs to 156 residues: Putative HTH-type transcriptional regulator YwgB (156 aa).

One can recognise an HTH rrf2-type domain in the interval Lys-2–Asp-133.

This chain is Putative HTH-type transcriptional regulator YwgB (ywgB), found in Bacillus subtilis (strain 168).